A 286-amino-acid chain; its full sequence is ATP synthase gamma chain (286 aa).

The protein belongs to the ATPase gamma chain family. As to quaternary structure, F-type ATPases have 2 components, CF(1) - the catalytic core - and CF(0) - the membrane proton channel. CF(1) has five subunits: alpha(3), beta(3), gamma(1), delta(1), epsilon(1). CF(0) has three main subunits: a, b and c.

It is found in the cell membrane. Produces ATP from ADP in the presence of a proton gradient across the membrane. The gamma chain is believed to be important in regulating ATPase activity and the flow of protons through the CF(0) complex. This chain is ATP synthase gamma chain, found in Malacoplasma penetrans (strain HF-2) (Mycoplasma penetrans).